A 221-amino-acid polypeptide reads, in one-letter code: 7-cyano-7-deazaguanine synthase (221 aa).

ATP is bound at residue 10–20; sequence LSGGLDSTTCM. Cys-188, Cys-196, Cys-199, and Cys-202 together coordinate Zn(2+).

The protein belongs to the QueC family. As to quaternary structure, homodimer. Zn(2+) serves as cofactor.

The catalysed reaction is 7-carboxy-7-deazaguanine + NH4(+) + ATP = 7-cyano-7-deazaguanine + ADP + phosphate + H2O + H(+). It participates in purine metabolism; 7-cyano-7-deazaguanine biosynthesis. In terms of biological role, catalyzes the ATP-dependent conversion of 7-carboxy-7-deazaguanine (CDG) to 7-cyano-7-deazaguanine (preQ(0)). This is 7-cyano-7-deazaguanine synthase from Oceanobacillus iheyensis (strain DSM 14371 / CIP 107618 / JCM 11309 / KCTC 3954 / HTE831).